The following is a 550-amino-acid chain: Gamma-aminobutyric acid receptor subunit beta (550 aa).

The signal sequence occupies residues Met1–Cys24. Over Gln25–Phe264 the chain is Extracellular. Asn26, Asn32, Asn33, Asn45, Asn53, and Asn193 each carry an N-linked (GlcNAc...) asparagine glycan. The cysteines at positions 180 and 194 are disulfide-linked. The next 3 helical transmembrane spans lie at Ile265 to Ile285, Ala292 to Val311, and Ile324 to Ala344. Topologically, residues Val345–Arg527 are cytoplasmic. The segment at Ala405 to His465 is disordered. Polar residues predominate over residues Met406–Thr421. Residues Val528–Val548 form a helical membrane-spanning segment.

Belongs to the ligand-gated ion channel (TC 1.A.9) family. Gamma-aminobutyric acid receptor (TC 1.A.9.5) subfamily.

The protein resides in the postsynaptic cell membrane. The protein localises to the cell membrane. In terms of biological role, GABA, an inhibitory neurotransmitter, mediates neuronal inhibition by binding to the GABA receptor and opening an integral chloride channel. This chain is Gamma-aminobutyric acid receptor subunit beta (gab-1), found in Caenorhabditis elegans.